The sequence spans 82 residues: UPF0154 protein SMU_1719c (82 aa).

Residues 4–24 (FLWILLVIIALLAGLVGGTFI) traverse the membrane as a helical segment.

This sequence belongs to the UPF0154 family.

Its subcellular location is the membrane. The chain is UPF0154 protein SMU_1719c from Streptococcus mutans serotype c (strain ATCC 700610 / UA159).